The chain runs to 189 residues: Potassium-transporting ATPase KdpC subunit (189 aa).

The helical transmembrane segment at 10 to 30 (VIFAMLTLICGVIYPYAITGI) threads the bilayer.

This sequence belongs to the KdpC family. The system is composed of three essential subunits: KdpA, KdpB and KdpC.

Its subcellular location is the cell inner membrane. Part of the high-affinity ATP-driven potassium transport (or Kdp) system, which catalyzes the hydrolysis of ATP coupled with the electrogenic transport of potassium into the cytoplasm. This subunit acts as a catalytic chaperone that increases the ATP-binding affinity of the ATP-hydrolyzing subunit KdpB by the formation of a transient KdpB/KdpC/ATP ternary complex. This is Potassium-transporting ATPase KdpC subunit from Janthinobacterium sp. (strain Marseille) (Minibacterium massiliensis).